The following is a 94-amino-acid chain: MLKPLGDRVVLKVQKEEEQSIGGIVIASNAKEKPTTGEVIAVGNGRILDNGQRVEPEVKVGQSVVFDKYAGSEVKYEGEEYLVIRENDIIAVID.

The protein belongs to the GroES chaperonin family. Heptamer of 7 subunits arranged in a ring. Interacts with the chaperonin GroEL.

It is found in the cytoplasm. Together with the chaperonin GroEL, plays an essential role in assisting protein folding. The GroEL-GroES system forms a nano-cage that allows encapsulation of the non-native substrate proteins and provides a physical environment optimized to promote and accelerate protein folding. GroES binds to the apical surface of the GroEL ring, thereby capping the opening of the GroEL channel. The polypeptide is Co-chaperonin GroES (Ligilactobacillus salivarius (strain UCC118) (Lactobacillus salivarius)).